We begin with the raw amino-acid sequence, 275 residues long: Adenylate kinase 2 (275 aa).

Gly2 carries N-myristoyl glycine lipidation. The interval 21–30 (KKKEKKKKKK) is required for cell membrane translocation but dispensable for cell membrane localization. An ATP-binding site is contributed by 39 to 44 (GSGKDT). The tract at residues 59-97 (CISKLLKEYKEEYNKENVLNEEENYFDEIEKCMIDGSLV) is NMP. Residues 95–97 (SLV), 126–129 (GFPR), and Gln133 each bind AMP. Arg164 lines the ATP pocket. Positions 165-214 (IIDPITNISYNENIIQIIKKKREGQELSDKEQKQLIIDNHLYNNLSNDIL) are LID. Positions 220 and 231 each coordinate AMP.

The protein belongs to the adenylate kinase family. In terms of assembly, monomer. Oligomer. Heterodimer composed of NMT and AK2; AK2 myristoylation stabilizes the complex. In terms of processing, myristoylation is required for cell membrane localization. May be palmitoylated at Cys-4 which stabilizes cell membrane localization of the myristoylated protein.

It is found in the parasitophorous vacuole membrane. The enzyme catalyses AMP + ATP = 2 ADP. Functionally, catalyzes the reversible transfer of the terminal phosphate group between ATP and AMP. Has very low activity with CTP, GTP, ITP and UTP and no activity with GMP, UMP or IMP in vitro. This chain is Adenylate kinase 2, found in Plasmodium falciparum (isolate 3D7).